The primary structure comprises 453 residues: UPF0210 protein MM_0081 (453 aa).

Belongs to the UPF0210 family.

The polypeptide is UPF0210 protein MM_0081 (Methanosarcina mazei (strain ATCC BAA-159 / DSM 3647 / Goe1 / Go1 / JCM 11833 / OCM 88) (Methanosarcina frisia)).